A 486-amino-acid polypeptide reads, in one-letter code: Glutamyl-tRNA(Gln) amidotransferase subunit A (486 aa).

Residues lysine 75 and serine 150 each act as charge relay system in the active site. Serine 174 acts as the Acyl-ester intermediate in catalysis.

Belongs to the amidase family. GatA subfamily. As to quaternary structure, heterotrimer of A, B and C subunits.

The enzyme catalyses L-glutamyl-tRNA(Gln) + L-glutamine + ATP + H2O = L-glutaminyl-tRNA(Gln) + L-glutamate + ADP + phosphate + H(+). Allows the formation of correctly charged Gln-tRNA(Gln) through the transamidation of misacylated Glu-tRNA(Gln) in organisms which lack glutaminyl-tRNA synthetase. The reaction takes place in the presence of glutamine and ATP through an activated gamma-phospho-Glu-tRNA(Gln). This Nostoc punctiforme (strain ATCC 29133 / PCC 73102) protein is Glutamyl-tRNA(Gln) amidotransferase subunit A.